The sequence spans 414 residues: Transmembrane protein 184A (414 aa).

Residues 1–32 are disordered; sequence MTDTPGLLGTPLAWTPPARPAGPQMERAGNGS. A run of 7 helical transmembrane segments spans residues 48–68, 83–103, 120–140, 177–197, 211–231, 248–268, and 290–310; these read VSGV…YLHL, LLFI…LLGG, FVIY…SAIM, LQFC…QAFG, LYIT…LFLF, FLTI…LAIL, and VAAG…SIAL. Disordered stretches follow at residues 323-342 and 364-414; these read TESS…GLKE and YTQQ…AEEL. Over residues 379–388 the composition is skewed to polar residues; the sequence is SVPSPRTPTH.

This sequence belongs to the TMEM184 family. Expressed in vascular cells (at protein level).

It localises to the cell membrane. The protein localises to the cytoplasm. The protein resides in the perinuclear region. It is found in the cytoplasmic vesicle membrane. Its subcellular location is the early endosome membrane. It localises to the endosome. The protein localises to the cytoplasmic vesicle. The protein resides in the secretory vesicle membrane. Its function is as follows. Acts as a heparin receptor in vascular cells. May be involved in vesicle transport in exocrine cells and Sertoli cells. This is Transmembrane protein 184A (TMEM184A) from Bos taurus (Bovine).